The sequence spans 439 residues: Xaa-Pro dipeptidase (439 aa).

Asp-244, Asp-255, His-335, Glu-380, and Glu-419 together coordinate Mn(2+).

Belongs to the peptidase M24B family. Bacterial-type prolidase subfamily. Requires Mn(2+) as cofactor.

It catalyses the reaction Xaa-L-Pro dipeptide + H2O = an L-alpha-amino acid + L-proline. Splits dipeptides with a prolyl residue in the C-terminal position. This is Xaa-Pro dipeptidase from Shewanella sp. (strain MR-4).